The chain runs to 664 residues: MKRINILNEDTANKIAAGEVVERPASVVKELIENSIDANAKNIIIEIEEGGISLIRIIDDGDGIYKDDIAKAFLPHATSKIQESEDIYNIHTLGFRGEALPSIASVGKVNLKSKQDEEAFGYEISIEGGKASEVTECGINKGTILEVQDLFFNVPARKKFLKSVSKESSLINDIVTRLSLANPKISFKLYNNHKKVLHTFGNGDLKDVIRTIYGKSITDNILYFSDSSDLITVYGYVGTEEIARGSRNNQSIFVNRRYIKNRALAIAVEQAFKSFSTVNKFPFFILFIEVYPEYVDVNIHPTKAEIKFNDERMIFKKIFGAVHTALKNEVFETFAIKEEENTKKEPLPTFEEITFKIKEEEEKVKFASSAAKTLISQGKDLKANNESSFKSVYDPSLNNINKTIVEESTDYNKENEEPISIPVDLKPNSYIENLVDDYSDNAEDEIKSNSEPIENVITENKYENIKPNPIAKFPPITIIGQYNKTYILGEYDGTLYMIDQHAAHEKILFEKYLKEIEEGTIIIQPLIVPSIIDLSIDDYSYFEENKDIFREAGFLLEEFGGSSLSLKEVPYFLGRLNPKNLFLDILDNLKNLGNGKTSEVKHNAIATKACKAAIKGNDKLEMNEMIKLIEDLRYIDDPFHCPHGRPVIIKFTSIDIDKKFKRII.

The protein belongs to the DNA mismatch repair MutL/HexB family.

Functionally, this protein is involved in the repair of mismatches in DNA. It is required for dam-dependent methyl-directed DNA mismatch repair. May act as a 'molecular matchmaker', a protein that promotes the formation of a stable complex between two or more DNA-binding proteins in an ATP-dependent manner without itself being part of a final effector complex. The protein is DNA mismatch repair protein MutL of Clostridium beijerinckii (strain ATCC 51743 / NCIMB 8052) (Clostridium acetobutylicum).